A 728-amino-acid chain; its full sequence is Probable ubiquitin-conjugating enzyme protein 17 (728 aa).

Residues 1–17 (MSSQASQRSSSTSAVAQ) are compositionally biased toward low complexity. 2 disordered regions span residues 1–23 (MSSQ…RERR) and 123–155 (SSRS…GSTR). The UBC core domain occupies 402 to 568 (DRTKRIAKEL…IEHATLNYAI (167 aa)). The active-site Glycyl thioester intermediate is the cysteine 495. Disordered stretches follow at residues 649–678 (PFAK…EAAA) and 709–728 (RTQP…STSS). The segment covering 658-678 (SERLKREQSEKEEKQKKEAAA) has biased composition (basic and acidic residues). The span at 710–728 (TQPTGDYSVPSVNEPSTSS) shows a compositional bias: polar residues.

This sequence belongs to the ubiquitin-conjugating enzyme family.

This Caenorhabditis elegans protein is Probable ubiquitin-conjugating enzyme protein 17 (ubc-17).